Here is a 308-residue protein sequence, read N- to C-terminus: Methionyl-tRNA formyltransferase (308 aa).

A (6S)-5,6,7,8-tetrahydrofolate-binding site is contributed by 110 to 113 (SLLP).

This sequence belongs to the Fmt family.

It catalyses the reaction L-methionyl-tRNA(fMet) + (6R)-10-formyltetrahydrofolate = N-formyl-L-methionyl-tRNA(fMet) + (6S)-5,6,7,8-tetrahydrofolate + H(+). In terms of biological role, attaches a formyl group to the free amino group of methionyl-tRNA(fMet). The formyl group appears to play a dual role in the initiator identity of N-formylmethionyl-tRNA by promoting its recognition by IF2 and preventing the misappropriation of this tRNA by the elongation apparatus. This Neisseria meningitidis serogroup C / serotype 2a (strain ATCC 700532 / DSM 15464 / FAM18) protein is Methionyl-tRNA formyltransferase.